The following is a 74-amino-acid chain: Conotoxin SIIID (74 aa).

Residues 1–20 (MMSKLGVLLTVCLLLFPLTA) form the signal peptide. Positions 21 to 53 (LPLDGDQPADQLEDRMQDDISSEQYPSFVRRQK) are excised as a propeptide. 3 disulfides stabilise this stretch: C54–C71, C55–C73, and C61–C74.

It belongs to the conotoxin M superfamily. Three disulfide isomers have been synthesized and tested. SIIID with the disulfide pairing 1-4;2-5;3-6 is the most active. As to expression, expressed by the venom duct.

Its subcellular location is the secreted. In terms of biological role, the short synthetic peptide SIIID (range 54-74, with disulfide pairing 1-4, 2-5 and 3-6) reversibly inhibits human alpha-7/CHRNA7 acetylcholine receptor (IC(50)=880 nM). Shows a paralytic effect in fish. This is Conotoxin SIIID from Conus striatus (Striated cone).